Consider the following 153-residue polypeptide: Deoxyuridine 5'-triphosphate nucleotidohydrolase (153 aa).

Substrate is bound by residues 71–73 (RSG), N84, 88–90 (TID), and K98.

This sequence belongs to the dUTPase family. Requires Mg(2+) as cofactor.

The enzyme catalyses dUTP + H2O = dUMP + diphosphate + H(+). The protein operates within pyrimidine metabolism; dUMP biosynthesis; dUMP from dCTP (dUTP route): step 2/2. In terms of biological role, this enzyme is involved in nucleotide metabolism: it produces dUMP, the immediate precursor of thymidine nucleotides and it decreases the intracellular concentration of dUTP so that uracil cannot be incorporated into DNA. The sequence is that of Deoxyuridine 5'-triphosphate nucleotidohydrolase from Wolbachia sp. subsp. Drosophila simulans (strain wRi).